Consider the following 341-residue polypeptide: HTH-type transcriptional repressor PurR (341 aa).

Residues 2–56 (ATIKDVAKRANVSTTTVSHVINKTRFVAEETRNAVWAAIKELHYSPSAVARSLKV) form the HTH lacI-type domain. Positions 4-23 (IKDVAKRANVSTTTVSHVIN) form a DNA-binding region, H-T-H motif. The DNA-binding element occupies 48–56 (SAVARSLKV). Positions 73, 190, 192, 221, and 275 each coordinate hypoxanthine.

In terms of assembly, homodimer.

It functions in the pathway purine metabolism; purine nucleotide biosynthesis [regulation]. Is the main repressor of the genes involved in the de novo synthesis of purine nucleotides, regulating purB, purC, purEK, purF, purHD, purL, purMN and guaBA expression. PurR is allosterically activated to bind its cognate DNA by binding the purine corepressors, hypoxanthine or guanine, thereby effecting transcription repression. This Shigella sonnei (strain Ss046) protein is HTH-type transcriptional repressor PurR.